We begin with the raw amino-acid sequence, 335 residues long: MTRILDNDLIGDEGSVERTLRPQYLREYIGQDRVKDQLMIFIEAAKRREESLDHVLLFGSPGLGKTTMAFVIANELGVHLKQTSGPAIEKAGDLVAILNDLEPGDVLFIDEIHRMPMAVEEILYSAMEDFYIDIMIGAGDTSRSVHLELPPFTLIGATTRAGMLSNPLRARFGITGHMEYYQTADLTEIVERTADIFDMTIKHEAAYELARRSRGTPRIANRLLKRVRDYAQIMGDGMITTQITDKALTMLDVDQEGLDYVDQKILRTMIEVYQGGPVGLGTLSVNIAEERDTVEDMYEPYLIQKGFIMRTRTGRVVTEKAYQHLGYPYEKTIKT.

The tract at residues 1–181 (MTRILDNDLI…FGITGHMEYY (181 aa)) is large ATPase domain (RuvB-L). Residues Leu-20, Arg-21, Gly-62, Lys-65, Thr-66, Thr-67, 128 to 130 (EDF), Arg-171, Tyr-181, and Arg-218 each bind ATP. A Mg(2+)-binding site is contributed by Thr-66. Positions 182–252 (QTADLTEIVE…ITDKALTMLD (71 aa)) are small ATPAse domain (RuvB-S). The segment at 255-335 (QEGLDYVDQK…GYPYEKTIKT (81 aa)) is head domain (RuvB-H). Residues Arg-291, Arg-310, Arg-312, and Arg-315 each coordinate DNA.

This sequence belongs to the RuvB family. As to quaternary structure, homohexamer. Forms an RuvA(8)-RuvB(12)-Holliday junction (HJ) complex. HJ DNA is sandwiched between 2 RuvA tetramers; dsDNA enters through RuvA and exits via RuvB. An RuvB hexamer assembles on each DNA strand where it exits the tetramer. Each RuvB hexamer is contacted by two RuvA subunits (via domain III) on 2 adjacent RuvB subunits; this complex drives branch migration. In the full resolvosome a probable DNA-RuvA(4)-RuvB(12)-RuvC(2) complex forms which resolves the HJ.

The protein resides in the cytoplasm. The enzyme catalyses ATP + H2O = ADP + phosphate + H(+). Functionally, the RuvA-RuvB-RuvC complex processes Holliday junction (HJ) DNA during genetic recombination and DNA repair, while the RuvA-RuvB complex plays an important role in the rescue of blocked DNA replication forks via replication fork reversal (RFR). RuvA specifically binds to HJ cruciform DNA, conferring on it an open structure. The RuvB hexamer acts as an ATP-dependent pump, pulling dsDNA into and through the RuvAB complex. RuvB forms 2 homohexamers on either side of HJ DNA bound by 1 or 2 RuvA tetramers; 4 subunits per hexamer contact DNA at a time. Coordinated motions by a converter formed by DNA-disengaged RuvB subunits stimulates ATP hydrolysis and nucleotide exchange. Immobilization of the converter enables RuvB to convert the ATP-contained energy into a lever motion, pulling 2 nucleotides of DNA out of the RuvA tetramer per ATP hydrolyzed, thus driving DNA branch migration. The RuvB motors rotate together with the DNA substrate, which together with the progressing nucleotide cycle form the mechanistic basis for DNA recombination by continuous HJ branch migration. Branch migration allows RuvC to scan DNA until it finds its consensus sequence, where it cleaves and resolves cruciform DNA. The sequence is that of Holliday junction branch migration complex subunit RuvB from Streptococcus equi subsp. equi (strain 4047).